Here is a 343-residue protein sequence, read N- to C-terminus: Low conductance mechanosensitive channel YnaI (343 aa).

Over 1-9 (MIAELFTNN) the chain is Periplasmic. Residues 10–30 (ALNLVIIFGSCAALILMSFWF) traverse the membrane as a helical segment. Residues 31–40 (RRGNRKRKGF) are Cytoplasmic-facing. The helical transmembrane segment at 41-61 (LFHAVQFLIYTIIISAVGSII) threads the bilayer. Residues 62–77 (NYVIENYKLKFITPGV) lie on the Periplasmic side of the membrane. Residues 78–98 (IDFICTSLIAVILTIKLFLLI) form a helical membrane-spanning segment. Topologically, residues 99 to 125 (NQFEKQQIKKGRDITSARIMSRIIKIT) are cytoplasmic. The chain crosses the membrane as a helical span at residues 126–146 (IIVVLVLLYGEHFGMSLSGLL). Residue Thr147 is a topological domain, periplasmic. A helical membrane pass occupies residues 148–168 (FGGIGGLAVGMAGKDILSNFF). At 169–343 (SGIMLYFDRP…DNITPPEQGR (175 aa)) the chain is on the cytoplasmic side.

Belongs to the MscS (TC 1.A.23) family. Homoheptamer.

The protein localises to the cell inner membrane. Mechanosensitive channel that protects cells against hypoosmotic stress when highly overexpressed. The polypeptide is Low conductance mechanosensitive channel YnaI (ynaI) (Escherichia coli (strain K12)).